We begin with the raw amino-acid sequence, 1390 residues long: Nuclear pore complex protein 14 (1390 aa).

2 stretches are compositionally biased toward polar residues: residues 434-455 (SQKP…STVF) and 464-521 (LKSS…STPK). Disordered regions lie at residues 434–530 (SQKP…KISD), 851–874 (PSSS…TQAD), and 985–1118 (QEIE…SKAA). A compositionally biased stretch (low complexity) spans 851–864 (PSSSLFSASPSTPS). Over residues 986–1033 (EIEKASSKVETLNKTEEVKDEKSENEVTPDLKSEEPKSLETKVKEEPK) the composition is skewed to basic and acidic residues. A compositionally biased stretch (low complexity) spans 1051–1071 (KTPSFSFNSTTTPKSTSSTSS). Repeat unit 1 spans residues 1073–1074 (FG). Positions 1073–1373 (FGGGLKTQTP…TPAPTSSVFG (301 aa)) are 17 X 2 AA repeats of F-G. Positions 1078-1090 (KTQTPSSSNSTNI) are enriched in polar residues. Residues 1091–1092 (FG) form repeat 2. The segment covering 1095–1109 (TTTTATPTPASNTSS) has biased composition (low complexity). A run of 6 repeats spans residues 1111-1112 (FG), 1122-1123 (FG), 1125-1126 (FG), 1163-1164 (FG), 1166-1167 (FG), and 1178-1179 (FG). The interval 1183 to 1280 (TAPTVPNVDD…QASAPATGTS (98 aa)) is disordered. A compositionally biased stretch (gly residues) spans 1201–1210 (NGGGSGGFMS). The segment covering 1231–1243 (TSTGTSASSSSWL) has biased composition (low complexity). Copy 9 of the repeat occupies 1244–1245 (FG). The span at 1264–1280 (TAGSSAQQASAPATGTS) shows a compositional bias: low complexity. Tandem repeats lie at residues 1283–1284 (FG), 1289–1290 (FG), 1295–1296 (FG), 1300–1301 (FG), 1315–1316 (FG), 1344–1345 (FG), 1357–1358 (FG), and 1372–1373 (FG). Over residues 1342-1371 (SLFGGGATPQTNTSIFGGGANTTPAPTSSV) the composition is skewed to polar residues. The tract at residues 1342–1390 (SLFGGGATPQTNTSIFGGGANTTPAPTSSVFGGGASANANKPTSFTSWR) is disordered. Residues 1378 to 1390 (ANANKPTSFTSWR) are compositionally biased toward polar residues.

As to quaternary structure, interacts with caspase ced-3 (via propeptide); the interaction tethers ced-3 to the nuclear membrane and prevents its autoprocessing in absence of ced-4.

It is found in the nucleus. The protein resides in the nuclear pore complex. Its subcellular location is the nucleus membrane. In terms of biological role, may serve as a docking site in the receptor-mediated import of substrates across the nuclear pore complex. Plays a role in apoptosis by tethering caspase ced-3 to the nuclear membrane preventing its autoprocessing in absence of ced-4. The polypeptide is Nuclear pore complex protein 14 (Caenorhabditis elegans).